Reading from the N-terminus, the 340-residue chain is Nucleoid-associated protein PSPA7_4451 (340 aa).

It belongs to the YejK family.

The protein localises to the cytoplasm. Its subcellular location is the nucleoid. The chain is Nucleoid-associated protein PSPA7_4451 from Pseudomonas paraeruginosa (strain DSM 24068 / PA7) (Pseudomonas aeruginosa (strain PA7)).